The chain runs to 338 residues: Phenylalanine--tRNA ligase alpha subunit (338 aa).

Residue Glu252 coordinates Mg(2+).

This sequence belongs to the class-II aminoacyl-tRNA synthetase family. Phe-tRNA synthetase alpha subunit type 1 subfamily. Tetramer of two alpha and two beta subunits. Mg(2+) is required as a cofactor.

Its subcellular location is the cytoplasm. It carries out the reaction tRNA(Phe) + L-phenylalanine + ATP = L-phenylalanyl-tRNA(Phe) + AMP + diphosphate + H(+). This Pseudomonas fluorescens (strain Pf0-1) protein is Phenylalanine--tRNA ligase alpha subunit.